The chain runs to 94 residues: MKTLLLTLVVVTILCLDLGLELTNAPDSWSSRRTCLCPAWVPLRSRPVAGHSKQCGSRGRRVDLGCAATCPIVKPGVNINCCSTDNCNPFPKRS.

Positions 1–19 are cleaved as a signal peptide; sequence MKTLLLTLVVVTILCLDLG. 4 disulfide bridges follow: Cys-35-Cys-55, Cys-37-Cys-66, Cys-70-Cys-81, and Cys-82-Cys-87.

This sequence belongs to the three-finger toxin family. Long-chain subfamily. Type II alpha-neurotoxin sub-subfamily. In terms of tissue distribution, expressed by the venom gland.

The protein resides in the secreted. Binds with high affinity to muscular nicotinic acetylcholine receptors (nAChRs), whereas it binds with a low affinity to neuronal alpha-7/CHRNA7 nAChRs. The protein is Long neurotoxin-like OH-31 of Ophiophagus hannah (King cobra).